The following is a 140-amino-acid chain: Organic hydroperoxide resistance protein-like (140 aa).

This sequence belongs to the OsmC/Ohr family.

This is Organic hydroperoxide resistance protein-like from Mycoplasma pneumoniae (strain ATCC 29342 / M129 / Subtype 1) (Mycoplasmoides pneumoniae).